The following is a 1135-amino-acid chain: Receptor-type guanylate cyclase gcy-4 (1135 aa).

The signal sequence occupies residues 1–20 (MTQLLRFLLILSIFCDFSHS). The Extracellular segment spans residues 21 to 483 (QRPTIRVGIA…CPIPFFDQYR (463 aa)). 9 N-linked (GlcNAc...) asparagine glycosylation sites follow: Asn37, Asn193, Asn209, Asn251, Asn349, Asn375, Asn431, Asn436, and Asn447. Residues 484 to 504 (LLIFVFVIVAGLLILAIFTCL) form a helical membrane-spanning segment. The Cytoplasmic portion of the chain corresponds to 505–1135 (TSMVRNQRAE…VMRREMMRVS (631 aa)). Residues 535-560 (KGRRLSTDSENSTVTKSSKGSSSKNF) form a disordered region. Residues 545–837 (NSTVTKSSKG…KDNLMDHVFS (293 aa)) enclose the Protein kinase domain. Residues 546–560 (STVTKSSKGSSSKNF) are compositionally biased toward low complexity. Residues 895 to 1025 (TVFFSDLVKF…DTVNTASRME (131 aa)) form the Guanylate cyclase domain.

It belongs to the adenylyl cyclase class-4/guanylyl cyclase family. In terms of tissue distribution, expressed bilaterally in ASE neurons.

The protein resides in the cell membrane. It catalyses the reaction GTP = 3',5'-cyclic GMP + diphosphate. In terms of biological role, guanylate cyclase involved in the production of the second messenger cGMP. Regulates chemotaxis responses toward salt ions in ASE sensory neurons. The chain is Receptor-type guanylate cyclase gcy-4 from Caenorhabditis briggsae.